The primary structure comprises 237 residues: Ribosomal RNA small subunit methyltransferase G (237 aa).

Residues glycine 78, phenylalanine 83, 129-130 (AE), and arginine 148 each bind S-adenosyl-L-methionine.

Belongs to the methyltransferase superfamily. RNA methyltransferase RsmG family.

It localises to the cytoplasm. Its function is as follows. Specifically methylates the N7 position of a guanine in 16S rRNA. The polypeptide is Ribosomal RNA small subunit methyltransferase G (Streptococcus pyogenes serotype M1).